A 64-amino-acid polypeptide reads, in one-letter code: Epidermal growth factor (64 aa).

Residues 1-21 form the signal peptide; that stretch reads MMRHLLLVGAAILIFVSDAQA. A Pyrrolidone carboxylic acid modification is found at Gln-22. Residues 25-61 enclose the EGF-like domain; that stretch reads GEDPCQIVRCSYGANCIAYGDTAICECPFGYSGIRCQ. Cystine bridges form between Cys-29–Cys-40, Cys-34–Cys-49, and Cys-51–Cys-60.

In terms of tissue distribution, albumen gland. Up-regulated in adult CNS after axotomy.

The protein localises to the secreted. Functionally, induces neurite outgrowth in specific adult neurons in vitro. The polypeptide is Epidermal growth factor (Lymnaea stagnalis (Great pond snail)).